The sequence spans 179 residues: Inosine/xanthosine triphosphatase (179 aa).

Position 71 (E71) interacts with Mg(2+). A substrate-binding site is contributed by 71–72 (EA).

Belongs to the YjjX NTPase family. As to quaternary structure, homodimer. It depends on Mg(2+) as a cofactor. The cofactor is Mn(2+).

It carries out the reaction XTP + H2O = XDP + phosphate + H(+). The enzyme catalyses ITP + H2O = IDP + phosphate + H(+). In terms of biological role, phosphatase that hydrolyzes non-canonical purine nucleotides such as XTP and ITP to their respective diphosphate derivatives. Probably excludes non-canonical purines from DNA/RNA precursor pool, thus preventing their incorporation into DNA/RNA and avoiding chromosomal lesions. The protein is Inosine/xanthosine triphosphatase of Shewanella sp. (strain MR-4).